Here is a 300-residue protein sequence, read N- to C-terminus: UPF0761 membrane protein PSHAa0171 (300 aa).

Transmembrane regions (helical) follow at residues 47–67 (LLSL…FPGF), 100–120 (NANQ…LLLI), 143–163 (FAVY…SIAV), 181–201 (FSGF…FIML), 215–235 (AIPG…GFAL), and 249–269 (AVAT…VVLL).

Belongs to the UPF0761 family.

Its subcellular location is the cell inner membrane. This is UPF0761 membrane protein PSHAa0171 from Pseudoalteromonas translucida (strain TAC 125).